A 1220-amino-acid polypeptide reads, in one-letter code: Plasma membrane calcium-transporting ATPase 3 (1220 aa).

The span at M1–D20 shows a compositional bias: polar residues. The segment at M1–Q23 is disordered. At M1 to T97 the chain is on the cytoplasmic side. The residue at position 8 (S8) is a Phosphoserine. A helical membrane pass occupies residues F98–A118. The Extracellular segment spans residues I119 to I155. The helical transmembrane segment at E156 to W176 threads the bilayer. At S177–L364 the chain is on the cytoplasmic side. A disordered region spans residues E298–K355. Basic and acidic residues-rich tracts occupy residues E299–Q308 and M342–K355. Residues T365–I384 form a helical membrane-spanning segment. Topologically, residues I385–F417 are extracellular. The chain crosses the membrane as a helical span at residues F418–L435. At A436–I849 the chain is on the cytoplasmic side. Residue D473 is the 4-aspartylphosphate intermediate of the active site. Positions 794 and 798 each coordinate Mg(2+). Residues S850–T869 traverse the membrane as a helical segment. Residues G870–L879 lie on the Extracellular side of the membrane. Residues K880–A900 traverse the membrane as a helical segment. The Cytoplasmic portion of the chain corresponds to T901–L920. Residues I921 to L943 form a helical membrane-spanning segment. Topologically, residues L944–L961 are extracellular. Residues H962–N983 form a helical membrane-spanning segment. At E984 to S1002 the chain is on the cytoplasmic side. The chain crosses the membrane as a helical span at residues N1003–G1024. Residues G1025 to S1034 lie on the Extracellular side of the membrane. A helical transmembrane segment spans residues T1035–A1056. The Cytoplasmic segment spans residues T1057 to L1220. The residue at position 1079 (T1079) is a Phosphothreonine. The tract at residues L1097–Q1114 is calmodulin-binding subdomain A. Phosphothreonine; by PKC is present on T1113. The calmodulin-binding subdomain B stretch occupies residues I1115–S1124. The interval E1166–I1186 is disordered.

This sequence belongs to the cation transport ATPase (P-type) (TC 3.A.3) family. Type IIB subfamily. Interacts with PDZD11. Interacts (via N-terminus) with YWHAE. In terms of tissue distribution, highly expressed in the cerebellum. Expressed in adrenal glands.

It localises to the cell membrane. It is found in the presynaptic cell membrane. It carries out the reaction Ca(2+)(in) + ATP + H2O = Ca(2+)(out) + ADP + phosphate + H(+). Down-regulated by YWHAE. Functionally, ATP-driven Ca(2+) ion pump involved in the maintenance of basal intracellular Ca(2+) levels at the presynaptic terminals. Uses ATP as an energy source to transport cytosolic Ca(2+) ions across the plasma membrane to the extracellular compartment. May counter-transport protons, but the mechanism and the stoichiometry of this Ca(2+)/H(+) exchange remains to be established. The protein is Plasma membrane calcium-transporting ATPase 3 of Homo sapiens (Human).